A 118-amino-acid polypeptide reads, in one-letter code: Small ribosomal subunit protein uS10 (118 aa).

Ser37 bears the Phosphoserine mark.

The protein belongs to the universal ribosomal protein uS10 family. In terms of assembly, component of the small ribosomal subunit (SSU). Mature yeast ribosomes consist of a small (40S) and a large (60S) subunit. The 40S small subunit contains 1 molecule of ribosomal RNA (18S rRNA) and at least 33 different proteins. The large 60S subunit contains 3 rRNA molecules (25S, 5.8S and 5S rRNA) and at least 46 different proteins.

The protein localises to the cytoplasm. Component of the ribosome, a large ribonucleoprotein complex responsible for the synthesis of proteins in the cell. The small ribosomal subunit (SSU) binds messenger RNAs (mRNAs) and translates the encoded message by selecting cognate aminoacyl-transfer RNA (tRNA) molecules. The large subunit (LSU) contains the ribosomal catalytic site termed the peptidyl transferase center (PTC), which catalyzes the formation of peptide bonds, thereby polymerizing the amino acids delivered by tRNAs into a polypeptide chain. The nascent polypeptides leave the ribosome through a tunnel in the LSU and interact with protein factors that function in enzymatic processing, targeting, and the membrane insertion of nascent chains at the exit of the ribosomal tunnel. The polypeptide is Small ribosomal subunit protein uS10 (rps20) (Schizosaccharomyces pombe (strain 972 / ATCC 24843) (Fission yeast)).